Here is a 313-residue protein sequence, read N- to C-terminus: 4-hydroxy-3-methylbut-2-enyl diphosphate reductase (313 aa).

Cysteine 12 contributes to the [4Fe-4S] cluster binding site. (2E)-4-hydroxy-3-methylbut-2-enyl diphosphate is bound by residues histidine 41 and histidine 74. Dimethylallyl diphosphate-binding residues include histidine 41 and histidine 74. Residues histidine 41 and histidine 74 each contribute to the isopentenyl diphosphate site. Cysteine 96 is a binding site for [4Fe-4S] cluster. Residue histidine 124 coordinates (2E)-4-hydroxy-3-methylbut-2-enyl diphosphate. Histidine 124 serves as a coordination point for dimethylallyl diphosphate. Residue histidine 124 coordinates isopentenyl diphosphate. Catalysis depends on glutamate 126, which acts as the Proton donor. Threonine 167 serves as a coordination point for (2E)-4-hydroxy-3-methylbut-2-enyl diphosphate. Cysteine 197 serves as a coordination point for [4Fe-4S] cluster. Serine 225, serine 226, asparagine 227, and serine 269 together coordinate (2E)-4-hydroxy-3-methylbut-2-enyl diphosphate. Dimethylallyl diphosphate is bound by residues serine 225, serine 226, asparagine 227, and serine 269. Residues serine 225, serine 226, asparagine 227, and serine 269 each contribute to the isopentenyl diphosphate site.

Belongs to the IspH family. As to quaternary structure, homodimer. It depends on [4Fe-4S] cluster as a cofactor.

The catalysed reaction is isopentenyl diphosphate + 2 oxidized [2Fe-2S]-[ferredoxin] + H2O = (2E)-4-hydroxy-3-methylbut-2-enyl diphosphate + 2 reduced [2Fe-2S]-[ferredoxin] + 2 H(+). It carries out the reaction dimethylallyl diphosphate + 2 oxidized [2Fe-2S]-[ferredoxin] + H2O = (2E)-4-hydroxy-3-methylbut-2-enyl diphosphate + 2 reduced [2Fe-2S]-[ferredoxin] + 2 H(+). It participates in isoprenoid biosynthesis; dimethylallyl diphosphate biosynthesis; dimethylallyl diphosphate from (2E)-4-hydroxy-3-methylbutenyl diphosphate: step 1/1. Its pathway is isoprenoid biosynthesis; isopentenyl diphosphate biosynthesis via DXP pathway; isopentenyl diphosphate from 1-deoxy-D-xylulose 5-phosphate: step 6/6. Its function is as follows. Catalyzes the conversion of 1-hydroxy-2-methyl-2-(E)-butenyl 4-diphosphate (HMBPP) into a mixture of isopentenyl diphosphate (IPP) and dimethylallyl diphosphate (DMAPP). Acts in the terminal step of the DOXP/MEP pathway for isoprenoid precursor biosynthesis. The protein is 4-hydroxy-3-methylbut-2-enyl diphosphate reductase of Buchnera aphidicola subsp. Schizaphis graminum (strain Sg).